The chain runs to 212 residues: Redox-sensing transcriptional repressor Rex (212 aa).

Residues 17–56 (KYHRYLQELMENDIDRISSKELSEKIGFTASQIRQDLNCF) constitute a DNA-binding region (H-T-H motif). NAD(+) is bound at residue 91-96 (GAGNIG).

Belongs to the transcriptional regulatory Rex family. Homodimer.

It localises to the cytoplasm. Its function is as follows. Modulates transcription in response to changes in cellular NADH/NAD(+) redox state. The polypeptide is Redox-sensing transcriptional repressor Rex (Clostridium perfringens (strain SM101 / Type A)).